The chain runs to 84 residues: Peptide Ctry2346 (84 aa).

Residues 1–23 (MKTQTLLFTFSLVLLMVATQTEA) form the signal peptide. At Leu-33 the chain carries Leucine amide. The propeptide occupies 37-84 (GLLDNLLGKRGLLFGKRALTNQDLFDLAYDPSLSAADMDALEMLLENY).

The protein belongs to the non-disulfide-bridged peptide (NDBP) superfamily. Short antimicrobial peptide (group 4) family. Expressed by the venom gland.

It is found in the secreted. The protein resides in the target cell membrane. Antimicrobial peptide. This Chaerilus tryznai (Scorpion) protein is Peptide Ctry2346.